Consider the following 311-residue polypeptide: MTKRESNTLAVLGCGMVFLVSLLDLANRLLGALGTAILSGILASMADQTADDSGRLFTNFTACVRRKETGAAVSDKISSHANANKVEILNKENLRGVKQADAVLLACQTHLYKALFDEPGMREALKKKLIISVLAGVTTAQLEAALGNGEDYFVIRAMPNIACFVRDSATVIEKPQRTFPEALLHVTDTVFKAVGNVFYIQPSAYDICTALCGSSPAFLAVFIDSMVDGAVAMGLSHKDAVDMAACTMRGAASLVLESGNPWTIRHQVASPGGSTMQGLLALEQGNVRSTISNALMVAAKEAKKLGSKENA.

The signal sequence occupies residues 1–31 (MTKRESNTLAVLGCGMVFLVSLLDLANRLLG). Asparagine 59 is a glycosylation site (N-linked (GlcNAc...) asparagine).

This sequence belongs to the pyrroline-5-carboxylate reductase family.

It functions in the pathway secondary metabolite biosynthesis. Delta-1-pyrroline-5-carboxylate reductase; part of the gene cluster that mediates the biosynthesis of KK-1, a novel cyclic depsipeptide with 10 residues which is a promising active compound with high activity against many plant pathogens, especially Botrytis cinerea. Within the pathway, kk1I catalyzes the synthesis of the L-pipecolic acid residue of KK-1 from delta-1-pyrroline-5-carboxylate (P5C), a metabolic intermediate of lysine. The nonribosomal peptide synthetase (NRPS) kk1B catalyzes the elongation and cyclization of the decapeptide chain composed of 1 D-lactic acid residue (D-Lac), 1 pipecolic acid residue (Pip), 1 aspartic acid residue (Asp), 1 isoleucine residue (Ile), 1 glycine residue (Gly), 1 tyrosine residue (Tyr) and 4 valine residues (Val). The Asp, Ile and 3 Val residues are N-methylated by the 5 methyltransferase domains from the NRPS (found in modules 3, 5, 6, 7 and 9), whereas the Tyr residue is O-methylated by the cluster encoded O-methyltransferase kk1A. The thioesterase kk1J is likely to be involved in the corrective mechanism of peptide chain synthesis. The D-lactate dehydrogenase kk1H is involved in the synthesis of D-lactic acid from pyruvic acid, which is recognized by the A domain of the first kk1B module. The pyrroline-5-carboxylate reductase kk1I is involved in the synthesis of the L-pipecolic acid residue of KK-1 from delta-1-pyrroline-5-carboxylate (P5C), a metabolic intermediate of lysine. It still is unclear how kk1C and kk1D are involved in the production of KK-1. In Curvularia clavata, this protein is Delta-1-pyrroline-5-carboxylate reductase kk1I.